The following is a 211-amino-acid chain: Probable GTP-binding protein EngB (211 aa).

The 175-residue stretch at 30-204 folds into the EngB-type G domain; that stretch reads EGFEVAFAGR…YTVLADWMEL (175 aa). Residues 38 to 45, 64 to 68, 82 to 85, 149 to 152, and 182 to 185 each bind GTP; these read GRSNAGKS, GRTQL, DLPG, TKAD, and LFSA. Positions 45 and 66 each coordinate Mg(2+).

The protein belongs to the TRAFAC class TrmE-Era-EngA-EngB-Septin-like GTPase superfamily. EngB GTPase family. The cofactor is Mg(2+).

Its function is as follows. Necessary for normal cell division and for the maintenance of normal septation. The protein is Probable GTP-binding protein EngB of Pseudomonas savastanoi pv. phaseolicola (strain 1448A / Race 6) (Pseudomonas syringae pv. phaseolicola (strain 1448A / Race 6)).